A 468-amino-acid polypeptide reads, in one-letter code: 6-phospho-beta-galactosidase (468 aa).

Residues Gln-19, His-116, Asn-159, Glu-160, and Asn-297 each coordinate D-galactose 6-phosphate. Residue Glu-160 is the Proton donor of the active site. The active-site Nucleophile is Glu-375. 4 residues coordinate D-galactose 6-phosphate: Ser-428, Trp-429, Lys-435, and Tyr-437.

This sequence belongs to the glycosyl hydrolase 1 family.

It carries out the reaction a 6-phospho-beta-D-galactoside + H2O = D-galactose 6-phosphate + an alcohol. Its pathway is carbohydrate metabolism; lactose degradation; D-galactose 6-phosphate and beta-D-glucose from lactose 6-phosphate: step 1/1. The chain is 6-phospho-beta-galactosidase from Streptococcus pyogenes serotype M4 (strain MGAS10750).